Reading from the N-terminus, the 180-residue chain is uncharacterized protein (180 aa).

The protein to H.influenzae HI_0656.1.

This is an uncharacterized protein from Escherichia coli (strain K12).